Consider the following 199-residue polypeptide: dITP/XTP pyrophosphatase (199 aa).

Ser8–Lys13 contacts substrate. Catalysis depends on Asp69, which acts as the Proton acceptor. Asp69 contributes to the Mg(2+) binding site. Substrate-binding positions include Ser70, Phe154–Asn157, Lys177, and His182–Arg183.

It belongs to the HAM1 NTPase family. Homodimer. Requires Mg(2+) as cofactor.

It carries out the reaction XTP + H2O = XMP + diphosphate + H(+). The catalysed reaction is dITP + H2O = dIMP + diphosphate + H(+). The enzyme catalyses ITP + H2O = IMP + diphosphate + H(+). Functionally, pyrophosphatase that catalyzes the hydrolysis of nucleoside triphosphates to their monophosphate derivatives, with a high preference for the non-canonical purine nucleotides XTP (xanthosine triphosphate), dITP (deoxyinosine triphosphate) and ITP. Seems to function as a house-cleaning enzyme that removes non-canonical purine nucleotides from the nucleotide pool, thus preventing their incorporation into DNA/RNA and avoiding chromosomal lesions. The polypeptide is dITP/XTP pyrophosphatase (Xanthomonas axonopodis pv. citri (strain 306)).